We begin with the raw amino-acid sequence, 131 residues long: Transcription antitermination protein NusB (131 aa).

This sequence belongs to the NusB family.

In terms of biological role, involved in transcription antitermination. Required for transcription of ribosomal RNA (rRNA) genes. Binds specifically to the boxA antiterminator sequence of the ribosomal RNA (rrn) operons. This chain is Transcription antitermination protein NusB, found in Campylobacter concisus (strain 13826).